Here is a 441-residue protein sequence, read N- to C-terminus: Monodehydroascorbate reductase 3 (441 aa).

FAD contacts are provided by residues 14–17 (GGVA), E41, R48, K53, I96, and 147–148 (RE). NAD(+) is bound by residues 173–179 (GGFLGLE), E197, R203, and G262. 175-179 (FLGLE) contributes to the NADP(+) binding site. 2 residues coordinate NADP(+): R203 and G262. D299 serves as a coordination point for FAD. 315-316 (EH) is a binding site for NAD(+). Residue 315 to 316 (EH) participates in NADP(+) binding. R321 serves as a coordination point for L-ascorbate. Y350 is a binding site for FAD. Residue Y350 participates in NAD(+) binding. An NADP(+)-binding site is contributed by Y350. R352 contacts L-ascorbate. S418 is subject to Phosphoserine.

It belongs to the FAD-dependent oxidoreductase family. Requires FAD as cofactor.

The protein localises to the cytoplasm. It catalyses the reaction 2 monodehydro-L-ascorbate radical + NADH + H(+) = 2 L-ascorbate + NAD(+). In terms of biological role, catalyzes the conversion of monodehydroascorbate to ascorbate, oxidizing NADH in the process. Required for producing sufficient ascorbate to maintain the interaction between Piriformospora indica and Arabidopsis in a mutualistic state. The polypeptide is Monodehydroascorbate reductase 3 (Arabidopsis thaliana (Mouse-ear cress)).